Consider the following 247-residue polypeptide: Probable transcriptional regulatory protein DvMF_3201 (247 aa).

The segment at 1–21 (MAGHSKWANIQHRKGRQDAKR) is disordered.

It belongs to the TACO1 family.

The protein resides in the cytoplasm. The protein is Probable transcriptional regulatory protein DvMF_3201 of Nitratidesulfovibrio vulgaris (strain DSM 19637 / Miyazaki F) (Desulfovibrio vulgaris).